Here is a 397-residue protein sequence, read N- to C-terminus: Anhydro-N-acetylmuramic acid kinase (397 aa).

21–28 is an ATP binding site; sequence GTSLDGVD. Residues 373-384 are compositionally biased toward polar residues; that stretch reads TPTNLPSVTGAS. Positions 373–397 are disordered; it reads TPTNLPSVTGASARTPLGSLSVPGP.

The protein belongs to the anhydro-N-acetylmuramic acid kinase family.

It catalyses the reaction 1,6-anhydro-N-acetyl-beta-muramate + ATP + H2O = N-acetyl-D-muramate 6-phosphate + ADP + H(+). The protein operates within amino-sugar metabolism; 1,6-anhydro-N-acetylmuramate degradation. It functions in the pathway cell wall biogenesis; peptidoglycan recycling. Functionally, catalyzes the specific phosphorylation of 1,6-anhydro-N-acetylmuramic acid (anhMurNAc) with the simultaneous cleavage of the 1,6-anhydro ring, generating MurNAc-6-P. Is required for the utilization of anhMurNAc either imported from the medium or derived from its own cell wall murein, and thus plays a role in cell wall recycling. This Salinibacter ruber (strain DSM 13855 / M31) protein is Anhydro-N-acetylmuramic acid kinase.